The chain runs to 93 residues: Cell division protein CrgA (93 aa).

The next 2 membrane-spanning stretches (helical) occupy residues 31 to 51 (VWFV…LMVF) and 70 to 90 (LGPW…LLTM).

The protein belongs to the CrgA family.

The protein resides in the cell membrane. Its function is as follows. Involved in cell division. The sequence is that of Cell division protein CrgA from Mycobacterium leprae (strain Br4923).